The sequence spans 64 residues: UPF0434 protein Oant_3286 (64 aa).

The protein belongs to the UPF0434 family.

This chain is UPF0434 protein Oant_3286, found in Brucella anthropi (strain ATCC 49188 / DSM 6882 / CCUG 24695 / JCM 21032 / LMG 3331 / NBRC 15819 / NCTC 12168 / Alc 37) (Ochrobactrum anthropi).